The following is an 801-amino-acid chain: Glycerol-3-phosphate acyltransferase 2, mitochondrial (801 aa).

Positions 1–24 (METMLKSNPQMQQRNNHSGQETSL) are disordered. Residues 1–305 (METMLKSNPQ…PGPRLSALGQ (305 aa)) are Cytoplasmic-facing. Residues 180–290 (QLHKGQMKMV…SGQPLLIFLE (111 aa)) are acyltransferase. Positions 205 to 210 (HKSLLD) match the HXXXXD motif motif. Residues 306–332 (AWLGLVVQAVQAGIVPDATLVPVATAY) form a helical membrane-spanning segment. Residues 333–449 (DLVPDAPCNM…QLLVRRLSRH (117 aa)) lie on the Mitochondrial intermembrane side of the membrane. Residues 450–472 (VLSASVASSAVMSTAIMATLLLL) form a helical membrane-spanning segment. Over 473 to 795 (KHQKGVVLSQ…DNQDKLEQFI (323 aa)) the chain is Cytoplasmic.

It belongs to the GPAT/DAPAT family. As to quaternary structure, interacts with PIWIL2. In terms of tissue distribution, expressed in spermatocytes and spermatides.

Its subcellular location is the mitochondrion outer membrane. The catalysed reaction is sn-glycerol 3-phosphate + an acyl-CoA = a 1-acyl-sn-glycero-3-phosphate + CoA. It catalyses the reaction a 1-acyl-sn-glycero-3-phosphate + an acyl-CoA = a 1,2-diacyl-sn-glycero-3-phosphate + CoA. The enzyme catalyses 1-(9Z-octadecenoyl)-sn-glycero-3-phosphate + (9Z)-octadecenoyl-CoA = 1,2-di-(9Z-octadecenoyl)-sn-glycero-3-phosphate + CoA. It carries out the reaction 1-(9Z-octadecenoyl)-sn-glycero-3-phosphate + (5Z,8Z,11Z,14Z)-eicosatetraenoyl-CoA = 1-(9Z)-octadecenoyl-2-(5Z,8Z,11Z,14Z)-eicosatetraenoyl-sn-glycero-3-phosphate + CoA. The catalysed reaction is (5Z,8Z,11Z,14Z)-eicosatetraenoyl-CoA + sn-glycerol 3-phosphate = 1-(5Z,8Z,11Z,14Z-eicosatetraenoyl)-sn-glycero-3-phosphate + CoA. Its pathway is phospholipid metabolism; CDP-diacylglycerol biosynthesis; CDP-diacylglycerol from sn-glycerol 3-phosphate: step 1/3. With respect to regulation, inhibited by N-ethylmaleimide (NEM). In terms of biological role, transfers an acyl-group from acyl-ACP to the sn-1 position of glycerol-3-phosphate producing a lysophosphatidic acid (LPA), an essential step for the triacylglycerol (TAG) and glycerophospholipids. In vitro also transfers an acyl-group from acyl-ACP to the LPA producing a phosphatidic acid (PA). Prefers arachidonoyl-CoA as the acyl donor. Required for primary processing step during piRNA biosynthesis. Molecular mechanisms by which it promotes piRNA biosynthesis are unclear and do not involve its acyltransferase activity. This is Glycerol-3-phosphate acyltransferase 2, mitochondrial from Rattus norvegicus (Rat).